The primary structure comprises 107 residues: Integration host factor subunit beta (107 aa).

Positions 76–107 are disordered; the sequence is FVPHFKPGKELRERVDGRAGEPLKADDPDDDR. Residues 82 to 101 are compositionally biased toward basic and acidic residues; sequence PGKELRERVDGRAGEPLKAD.

It belongs to the bacterial histone-like protein family. Heterodimer of an alpha and a beta chain.

In terms of biological role, this protein is one of the two subunits of integration host factor, a specific DNA-binding protein that functions in genetic recombination as well as in transcriptional and translational control. This chain is Integration host factor subunit beta, found in Burkholderia cenocepacia (strain HI2424).